The sequence spans 550 residues: Putative pentatricopeptide repeat-containing protein At5g37570 (550 aa).

PPR repeat units follow at residues 73–107 (GTYL…GLAR), 109–143 (DEYT…GFDK), 144–174 (DVVV…MPER), 175–205 (NAVS…MPER), 206–240 (NLGS…DIIS), 241–267 (YTSM…ARGV), 268–302 (DVRA…NVKP), 303–333 (DEFI…LHQR), 339–369 (SHYV…MPQR), 370–404 (DLVS…GIVP), 405–435 (DEVA…MRKK), and 441–475 (SPDH…AHAS). The interval 476–550 (AWGSLLGGCS…KICGRSWISR (75 aa)) is type E motif.

This sequence belongs to the PPR family. PCMP-E subfamily.

This Arabidopsis thaliana (Mouse-ear cress) protein is Putative pentatricopeptide repeat-containing protein At5g37570 (PCMP-E37).